A 428-amino-acid chain; its full sequence is AP-1 complex subunit mu (428 aa).

A2 bears the N-acetylalanine; partial mark. The region spanning 169–426 (KNEVFLDVVE…VCLSGDYQFR (258 aa)) is the MHD domain.

The protein belongs to the adaptor complexes medium subunit family. In terms of assembly, adaptor protein complex 1 (AP-1) is a heterotetramer composed of two large adaptins (gamma-type subunit and beta-type subunit), a medium adaptin (mu-type subunit) and a small adaptin (sigma-type subunit).

It is found in the golgi apparatus. Its subcellular location is the trans-Golgi network. It localises to the cytoplasmic vesicle. The protein resides in the clathrin-coated vesicle membrane. Its function is as follows. Subunit of clathrin-associated adaptor protein complex 1 that plays a role in protein sorting in the trans-Golgi network (TGN) and endosomes. The AP complexes mediate the recruitment of clathrin to membranes and the recognition of sorting signals within the cytosolic tails of transmembrane cargo molecules. Also involved in early steps of phagocytosis and macropinocytosis. This Dictyostelium discoideum (Social amoeba) protein is AP-1 complex subunit mu (apm1).